The following is a 178-amino-acid chain: Large ribosomal subunit protein uL6 (178 aa).

It belongs to the universal ribosomal protein uL6 family. Part of the 50S ribosomal subunit.

Its function is as follows. This protein binds to the 23S rRNA, and is important in its secondary structure. It is located near the subunit interface in the base of the L7/L12 stalk, and near the tRNA binding site of the peptidyltransferase center. This is Large ribosomal subunit protein uL6 from Campylobacter jejuni subsp. doylei (strain ATCC BAA-1458 / RM4099 / 269.97).